The chain runs to 393 residues: NAD(P)H-quinone oxidoreductase subunit H, chloroplastic (393 aa).

This sequence belongs to the complex I 49 kDa subunit family. As to quaternary structure, NDH is composed of at least 16 different subunits, 5 of which are encoded in the nucleus.

It is found in the plastid. The protein resides in the chloroplast thylakoid membrane. It catalyses the reaction a plastoquinone + NADH + (n+1) H(+)(in) = a plastoquinol + NAD(+) + n H(+)(out). The catalysed reaction is a plastoquinone + NADPH + (n+1) H(+)(in) = a plastoquinol + NADP(+) + n H(+)(out). In terms of biological role, NDH shuttles electrons from NAD(P)H:plastoquinone, via FMN and iron-sulfur (Fe-S) centers, to quinones in the photosynthetic chain and possibly in a chloroplast respiratory chain. The immediate electron acceptor for the enzyme in this species is believed to be plastoquinone. Couples the redox reaction to proton translocation, and thus conserves the redox energy in a proton gradient. The chain is NAD(P)H-quinone oxidoreductase subunit H, chloroplastic from Crucihimalaya wallichii (Rock-cress).